The following is a 276-amino-acid chain: Putative translation initiation factor eIF-2B subunit 2-like (276 aa).

Belongs to the eIF-2B alpha/beta/delta subunits family. In terms of assembly, complex of two different subunits.

Functionally, catalyzes the exchange of initiation factor 2-bound GDP for GTP. The polypeptide is Putative translation initiation factor eIF-2B subunit 2-like (Pyrococcus abyssi (strain GE5 / Orsay)).